A 500-amino-acid chain; its full sequence is Ent-cassadiene C11-alpha-hydroxylase 1 (500 aa).

Residues 4-24 traverse the membrane as a helical segment; that stretch reads SQVWLLWGALSVAVLFYLSTL. Residue Cys442 coordinates heme.

Belongs to the cytochrome P450 family. The cofactor is heme.

It localises to the membrane. The catalysed reaction is ent-cassa-12,15-diene + reduced [NADPH--hemoprotein reductase] + O2 = ent-11beta-hydroxycassa-12,15-diene + oxidized [NADPH--hemoprotein reductase] + H2O + H(+). Enzyme of the diterpenoid metabolism involved in the biosynthesis of antibacterial oryzalides such as phytocassane. Can use ent-cassadiene as substrate, but not C11-alpha-hydroxy-ent-cassadiene, ent-pimaradiene, ent-sandaracopimaradiene, ent-kaurene, ent-isokaurene, syn-pimaradiene, syn-stemarene, syn-stemodene. The chain is Ent-cassadiene C11-alpha-hydroxylase 1 from Oryza sativa subsp. japonica (Rice).